A 155-amino-acid polypeptide reads, in one-letter code: 3-hydroxyacyl-[acyl-carrier-protein] dehydratase FabZ (155 aa).

His-59 is an active-site residue.

It belongs to the thioester dehydratase family. FabZ subfamily.

The protein localises to the cytoplasm. It catalyses the reaction a (3R)-hydroxyacyl-[ACP] = a (2E)-enoyl-[ACP] + H2O. Its function is as follows. Involved in unsaturated fatty acids biosynthesis. Catalyzes the dehydration of short chain beta-hydroxyacyl-ACPs and long chain saturated and unsaturated beta-hydroxyacyl-ACPs. The chain is 3-hydroxyacyl-[acyl-carrier-protein] dehydratase FabZ from Bartonella quintana (strain Toulouse) (Rochalimaea quintana).